The chain runs to 363 residues: 3-dehydroquinate synthase (363 aa).

Residues 72–77, 130–131, Lys-142, and Lys-151 each bind NAD(+); these read SGEKEK and TT. Positions 184, 247, and 264 each coordinate Zn(2+).

This sequence belongs to the sugar phosphate cyclases superfamily. Dehydroquinate synthase family. It depends on Co(2+) as a cofactor. Requires Zn(2+) as cofactor. NAD(+) serves as cofactor.

The protein localises to the cytoplasm. It catalyses the reaction 7-phospho-2-dehydro-3-deoxy-D-arabino-heptonate = 3-dehydroquinate + phosphate. It participates in metabolic intermediate biosynthesis; chorismate biosynthesis; chorismate from D-erythrose 4-phosphate and phosphoenolpyruvate: step 2/7. In terms of biological role, catalyzes the conversion of 3-deoxy-D-arabino-heptulosonate 7-phosphate (DAHP) to dehydroquinate (DHQ). This Bacillus anthracis (strain A0248) protein is 3-dehydroquinate synthase.